A 491-amino-acid chain; its full sequence is Histamine H1 receptor (491 aa).

At 1–30 (MTCPNSSCVFEDKMCQGNKTAPANDAQLTP) the chain is on the extracellular side. Residues asparagine 5 and asparagine 18 are each glycosylated (N-linked (GlcNAc...) asparagine). The helical transmembrane segment at 31–51 (LVVVLSTISLVTVGLNLLVLY) threads the bilayer. Residues 52-65 (AVRSERKLHTVGNL) are Cytoplasmic-facing. A helical membrane pass occupies residues 66–90 (YIVSLSVADLIVGVVVMPMNILYLL). The Extracellular portion of the chain corresponds to 91–98 (MSRWSLGR). Residues 99–124 (PLCLFWLSMDYVASTASIFSVFILCI) traverse the membrane as a helical segment. Cysteine 101 and cysteine 181 form a disulfide bridge. The histamine site is built by aspartate 108 and threonine 113. Residues 108 to 113 (DYVAST) form an important for agonist binding region. Topologically, residues 125–145 (DRYRSVQQPLKYLRYRTKTRA) are cytoplasmic. Residues threonine 141 and threonine 143 each carry the phosphothreonine modification. The chain crosses the membrane as a helical span at residues 146 to 165 (SITILAAWFLSFLWIIPILG). Topologically, residues 166–189 (WRHFQPKTPEPREDKCETDFYNVT) are extracellular. Residues 190–212 (WFKVMTAIINFYLPTLLMLWFYA) form a helical membrane-spanning segment. Asparagine 199 serves as a coordination point for histamine. Topologically, residues 213-420 (KIYKAVRQHC…MNRERKAAKQ (208 aa)) are cytoplasmic. Serine 231 bears the Phosphoserine mark. 2 disordered regions span residues 246–297 (QVGA…KEEK) and 360–385 (QSFS…SESS). Residues 252–262 (PGKESPWEVLK) show a composition bias toward basic and acidic residues. Serine 384, serine 400, and serine 402 each carry phosphoserine. Residues 421 to 444 (LGFIMAAFIICWIPYFIFFMVIAF) form a helical membrane-spanning segment. The segment at 428–432 (FIICW) is important for agonist binding. Position 435 (tyrosine 435) interacts with histamine. Residues cysteine 445 and cysteine 448 are joined by a disulfide bond. Residues 445 to 450 (CESCCN) are Extracellular-facing. Residues 451–473 (QHVHMFTIWLGYINSTLNPLIYP) traverse the membrane as a helical segment. Residues 474–491 (LCNENFKKTFKKILHIRS) are Cytoplasmic-facing.

This sequence belongs to the G-protein coupled receptor 1 family. Phosphorylation at sites in the second and third cytoplasmic loops independently contribute to agonist-induced receptor down-regulation. Brain, lung, small intestine, uterus, adrenal medulla and spleen.

Its subcellular location is the cell membrane. In terms of biological role, G-protein-coupled receptor for histamine, a biogenic amine that functions as an immune modulator and a neurotransmitter. Through the H1 receptor, histamine mediates the contraction of smooth muscles and increases capillary permeability due to contraction of terminal venules. Also mediates neurotransmission in the central nervous system and thereby regulates circadian rhythms, emotional and locomotor activities as well as cognitive functions. This chain is Histamine H1 receptor, found in Bos taurus (Bovine).